Here is a 547-residue protein sequence, read N- to C-terminus: Vacuolar fusion protein MON1 homolog B (547 aa).

The residue at position 1 (Met-1) is an N-acetylmethionine. The interval 1–106 is disordered; the sequence is MEAGGDTAAP…GGDPSDEEWR (106 aa). Positions 57–66 are enriched in pro residues; the sequence is PPSPSPPPQS. Ser-59 and Ser-61 each carry phosphoserine.

It belongs to the MON1/SAND family. In terms of assembly, interacts with CCNT2; down-regulates CCNT2-mediated activation of viral promoters during herpes simplex virus 1/HHV-1 infection. Found in a complex with RMC1, CCZ1 MON1A and MON1B.

This chain is Vacuolar fusion protein MON1 homolog B (MON1B), found in Macaca fascicularis (Crab-eating macaque).